Reading from the N-terminus, the 189-residue chain is Protein GrpE (189 aa).

Residues 1-20 (MSDQQHSAPQNAAATASPSD) are compositionally biased toward polar residues. Residues 1 to 29 (MSDQQHSAPQNAAATASPSDSPEAVEATM) form a disordered region.

It belongs to the GrpE family. As to quaternary structure, homodimer.

The protein resides in the cytoplasm. Its function is as follows. Participates actively in the response to hyperosmotic and heat shock by preventing the aggregation of stress-denatured proteins, in association with DnaK and GrpE. It is the nucleotide exchange factor for DnaK and may function as a thermosensor. Unfolded proteins bind initially to DnaJ; upon interaction with the DnaJ-bound protein, DnaK hydrolyzes its bound ATP, resulting in the formation of a stable complex. GrpE releases ADP from DnaK; ATP binding to DnaK triggers the release of the substrate protein, thus completing the reaction cycle. Several rounds of ATP-dependent interactions between DnaJ, DnaK and GrpE are required for fully efficient folding. This is Protein GrpE from Paracidovorax citrulli (strain AAC00-1) (Acidovorax citrulli).